A 968-amino-acid chain; its full sequence is RNA polymerase-associated protein RapA (968 aa).

The 170-residue stretch at 163–332 (EVGRRFAPRV…FARLRLLDPD (170 aa)) folds into the Helicase ATP-binding domain. An ATP-binding site is contributed by 176–183 (DEVGLGKT). The short motif at 278 to 281 (DEAH) is the DEAH box element. A Helicase C-terminal domain is found at 491 to 641 (RVDWLINFLK…AFEQTCPSGH (151 aa)).

The protein belongs to the SNF2/RAD54 helicase family. RapA subfamily. As to quaternary structure, interacts with the RNAP. Has a higher affinity for the core RNAP than for the holoenzyme. Its ATPase activity is stimulated by binding to RNAP.

In terms of biological role, transcription regulator that activates transcription by stimulating RNA polymerase (RNAP) recycling in case of stress conditions such as supercoiled DNA or high salt concentrations. Probably acts by releasing the RNAP, when it is trapped or immobilized on tightly supercoiled DNA. Does not activate transcription on linear DNA. Probably not involved in DNA repair. This is RNA polymerase-associated protein RapA from Shewanella sediminis (strain HAW-EB3).